A 524-amino-acid chain; its full sequence is MLHQPKTKATVGRLDAETVNAARVRGPLYEKRRKIFPKRAEGRFRRFKWLVMLVTLGIYYLTPWIRWDRGAHAPDQAVLIDLASRRFYFFFIEIWPQEFFFVAGLLVMAGFGLFLVTSAVGRAWCGYACPQTVWVDLFLVVERFIEGDRNARMRLDAGPWSLDKIRKRVAKHAIWVAIGVATGGAWIFYFADAPSLMSSLVALDAPPVAYTTIGILTATTYVFGGLMREQVCTYMCPWPRIQAAMLDENSLVVTYNDWRGEPRSRHAKKAAAAGEVVGDCVDCNACVAVCPMGIDIRDGQQLECITCALCIDACDGVMDKLGRERGLISYATLSDYAANMALATSGGTAAIDPSRVRNAHGAFRDKVRHLNWRIVFRPRVLVYFGVWATVGFGLLFGLLARDRLELNVLHDRNPQFVVESDGSVRNGYMVKLLNMIPEQRTISLTIEGMPAATMRVAGQATGDGRRVTIGVEPDKVTPLKVFVTLPKGRFAEAEEGFSLIAEDPSSHERDVYQANFNLPGAAGR.

3 helical membrane passes run 99–119 (FFFVAGLLVMAGFGLFLVTSA), 173–193 (AIWVAIGVATGGAWIFYFADA), and 207–227 (PVAYTTIGILTATTYVFGGLM). The 4Fe-4S ferredoxin-type domain occupies 272 to 299 (AAGEVVGDCVDCNACVAVCPMGIDIRDG). The [4Fe-4S] cluster site is built by C280, C283, C286, C290, C304, C307, C310, and C314. Residues 380-400 (VLVYFGVWATVGFGLLFGLLA) form a helical membrane-spanning segment.

The protein localises to the cell membrane. Functionally, fixG is predicted to be involved in a redox process. The four proteins FixG, FixH, FixI, and FixS may participate in a membrane-bound complex coupling the FixI cation pump with a redox process catalyzed by FixG. In Rhizobium meliloti (strain 1021) (Ensifer meliloti), this protein is Nitrogen fixation protein FixG (fixG).